The following is a 124-amino-acid chain: Putative transmembrane protein FLJ36131 (124 aa).

Residues 1–2 lie on the Cytoplasmic side of the membrane; it reads MY. A helical membrane pass occupies residues 3–23; the sequence is VSISFLLGLSHLVLCCLLTFI. The Extracellular portion of the chain corresponds to 24 to 124; that stretch reads VNFYLPPESI…LLTTTSYSVS (101 aa). Asn-41 carries N-linked (GlcNAc...) asparagine glycosylation.

Its subcellular location is the membrane. The protein is Putative transmembrane protein FLJ36131 of Homo sapiens (Human).